Here is a 607-residue protein sequence, read N- to C-terminus: DNA mismatch repair protein MutL (607 aa).

It belongs to the DNA mismatch repair MutL/HexB family.

In terms of biological role, this protein is involved in the repair of mismatches in DNA. It is required for dam-dependent methyl-directed DNA mismatch repair. May act as a 'molecular matchmaker', a protein that promotes the formation of a stable complex between two or more DNA-binding proteins in an ATP-dependent manner without itself being part of a final effector complex. The sequence is that of DNA mismatch repair protein MutL from Anaeromyxobacter dehalogenans (strain 2CP-1 / ATCC BAA-258).